We begin with the raw amino-acid sequence, 396 residues long: Elongation factor Tu (396 aa).

Residues 11 to 205 (KPHVNIGTIG…VVDEYIPTPE (195 aa)) form the tr-type G domain. The tract at residues 20 to 27 (GHVDHGKT) is G1. 20–27 (GHVDHGKT) lines the GTP pocket. T27 serves as a coordination point for Mg(2+). Residues 61–65 (GITIN) form a G2 region. The G3 stretch occupies residues 82–85 (DAPG). GTP-binding positions include 82-86 (DAPGH) and 137-140 (NKCD). The segment at 137–140 (NKCD) is G4. Positions 175–177 (SAL) are G5.

It belongs to the TRAFAC class translation factor GTPase superfamily. Classic translation factor GTPase family. EF-Tu/EF-1A subfamily. In terms of assembly, monomer.

The protein localises to the cytoplasm. The catalysed reaction is GTP + H2O = GDP + phosphate + H(+). Functionally, GTP hydrolase that promotes the GTP-dependent binding of aminoacyl-tRNA to the A-site of ribosomes during protein biosynthesis. This Lactobacillus delbrueckii subsp. bulgaricus (strain ATCC 11842 / DSM 20081 / BCRC 10696 / JCM 1002 / NBRC 13953 / NCIMB 11778 / NCTC 12712 / WDCM 00102 / Lb 14) protein is Elongation factor Tu.